Reading from the N-terminus, the 111-residue chain is MKRRSVCVGDTVYVLAGNDKGKQGKVLRCLKDKVVVEGINVRVKNIKRSQENPKGKRINIEAPLHISNVRLSIDNQPARLFVKVTEKGRELWNKHSDGSSSLYRLVRERKG.

Belongs to the universal ribosomal protein uL24 family. In terms of assembly, part of the 50S ribosomal subunit.

Functionally, one of two assembly initiator proteins, it binds directly to the 5'-end of the 23S rRNA, where it nucleates assembly of the 50S subunit. One of the proteins that surrounds the polypeptide exit tunnel on the outside of the subunit. In Chlamydia muridarum (strain MoPn / Nigg), this protein is Large ribosomal subunit protein uL24.